We begin with the raw amino-acid sequence, 427 residues long: Interferon regulatory factor 3 (427 aa).

A Phosphothreonine modification is found at T3. The segment at residues 5–111 is a DNA-binding region (IRF tryptophan pentad repeat); the sequence is KPRILPWLVS…DPHKIYEFVN (107 aa). A Phosphoserine modification is found at S14. Phosphothreonine is present on T75. Basic and acidic residues predominate over residues 91 to 107; that stretch reads RLAEDRSKDPHDPHKIY. The disordered stretch occupies residues 91-136; it reads RLAEDRSKDPHDPHKIYEFVNSGVGDFSQPDTSPDTNGGGSTSDTQ. Residues S97 and S123 each carry the phosphoserine modification. The Nuclear export signal motif lies at 139–149; that stretch reads ILDELLGNMVL. The segment at 141–427 is mediates interaction with ZDHHC11; it reads DELLGNMVLA…GMDFQGPGES (287 aa). S175 bears the (Microbial infection) Phosphoserine mark. T180 carries the post-translational modification Phosphothreonine. A Phosphoserine modification is found at S188. Residue K193 forms a Glycyl lysine isopeptide (Lys-Gly) (interchain with G-Cter in ISG15) linkage. Residues 200 to 360 are interaction with HERC5; the sequence is EEWEFEVTAF…SWPQDQPWTK (161 aa). Residues T237, T244, and T253 each carry the phosphothreonine modification. A disulfide bond links C267 and C289. Glycyl lysine isopeptide (Lys-Gly) (interchain with G-Cter in ISG15) cross-links involve residues K360 and K366. Position 366 is an N6-acetyllysine (K366). Residue S385 is modified to Phosphoserine. The residue at position 386 (S386) is a Diphosphoserine. S386 carries the phosphoserine; by TBK1 modification. Phosphoserine; by IKKE and TBK1 is present on S396. Phosphoserine is present on S398. Position 404 is a phosphothreonine (T404). At S427 the chain carries Phosphoserine.

Belongs to the IRF family. In terms of assembly, monomer. Homodimer; phosphorylation-induced. Interacts (when phosphorylated) with CREBBP. Interacts with MAVS (via phosphorylated pLxIS motif). Interacts with TICAM1 (via phosphorylated pLxIS motif). Interacts with STING1 (via phosphorylated pLxIS motif). Interacts with IKBKE and TBK1. Interacts with TICAM2. Interacts with RBCK1. Interacts with HERC5. Interacts with DDX3X (phosphorylated at 'Ser-102'); the interaction allows the phosphorylation and activation of IRF3 by IKBKE. Interacts with TRIM21 and ULK1, in the presence of TRIM21; this interaction leads to IRF3 degradation by autophagy. Interacts with RIOK3; RIOK3 probably mediates the interaction of TBK1 with IRF3. Interacts with ILRUN; the interaction inhibits IRF3 binding to its DNA consensus sequence. Interacts with LYAR; this interaction impairs IRF3 DNA-binding activity. Interacts with TRAF3. Interacts with ZDHHC11; ZDHHC11 recruits IRF3 to STING1 upon DNA virus infection and thereby promotes IRF3 activation. Interacts with HSP90AA1; the interaction mediates IRF3 association with TOMM70. Interacts with BCL2; the interaction decreases upon Sendai virus infection. Interacts with BAX; the interaction is direct, increases upon Sendai virus infection and mediates the formation of the apoptosis complex TOMM70:HSP90AA1:IRF3:BAX. Interacts with DDX56. Interacts with NBR1. (Microbial infection) Interacts with rotavirus A NSP1 (via pLxIS motif); this interaction leads to the proteasome-dependent degradation of IRF3. As to quaternary structure, (Microbial infection) Interacts with herpes virus 8/HHV-8 protein VIRF1. In terms of assembly, (Microbial infection) Interacts with Seneca Valley virus protease 3C; this interaction is involved in the suppression of IRF3 expression and phosphorylation by the virus. (Microbial infection) Interacts with herpes virus 2/HHV-2 protein ICP27; this interaction inhibits IRF3 phosphorylation and nuclear translocation. As to quaternary structure, (Microbial infection) Interacts with human cytomegalovirus protein UL44; this interaction prevents IRF3 binding to its promoters. In terms of assembly, (Microbial infection) Interacts with the two fragments of MERS-COV protein N produced by CASP6 through proteolytic cleavage; both interactions inhibit IRF3 nuclear translocation after activation and IFN signaling. Post-translationally, constitutively phosphorylated on many Ser/Thr residues. Activated following phosphorylation by TBK1 and IKBKE. Innate adapter proteins, such as MAVS, STING1 or TICAM1, are first activated by viral RNA, cytosolic DNA, and bacterial lipopolysaccharide (LPS), respectively, leading to activation of the kinases TBK1 and IKBKE. These kinases then phosphorylate the adapter proteins on the pLxIS motif, leading to recruitment of IRF3, thereby licensing IRF3 for phosphorylation by TBK1. Phosphorylation at Ser-386 is followed by pyrophosphorylation at the same residue, promoting phosphorylation at Ser-396. Phosphorylated IRF3 dissociates from the adapter proteins, dimerizes, and then enters the nucleus to induce IFNs. In terms of processing, pyrophosphorylated by UAP1 following phosphorylation at Ser-386 by TBK1. Pyrophosphorylation promotes subsequent phosphorylation at Ser-396, leading to homodimerization of IRF3. Acetylation at Lys-366 by KAT8 inhibits recruimtent to promoters and transcription factor activity. Acetylation by KAT8 is promoted by phosphorylation at Ser-396. Post-translationally, ubiquitinated; ubiquitination involves RBCK1 leading to proteasomal degradation. Polyubiquitinated; ubiquitination involves TRIM21 leading to proteasomal degradation. Ubiquitinated by UBE3C, leading to its degradation. Deubiquitinated by USP5 on both 'Lys-48'-linked unanchored and 'Lys-63'-linked anchored polyubiquitin, leading to inhibition of anti-RNA viral innate immunity. In terms of processing, ISGylated by HERC5 resulting in sustained IRF3 activation and in the inhibition of IRF3 ubiquitination by disrupting PIN1 binding. The phosphorylation state of IRF3 does not alter ISGylation. Proteolytically cleaved by apoptotic caspases during apoptosis, leading to its inactivation. Cleavage by CASP3 during virus-induced apoptosis inactivates it, preventing cytokine overproduction. Post-translationally, (Microbial infection) ISGylated. ISGylation is cleaved and removed by SARS-COV-2 nsp3 which attenuates type I interferon responses. In terms of processing, (Microbial infection) Phosphorylation and subsequent activation of IRF3 is inhibited by vaccinia virus protein E3. (Microbial infection) Phosphorylated by herpes simplex virus 1/HHV-1 US3 at Ser-175 to prevent IRF3 activation. As to expression, expressed constitutively in a variety of tissues.

The protein resides in the cytoplasm. It localises to the nucleus. The protein localises to the mitochondrion. With respect to regulation, in the absence of viral infection, maintained as a monomer in an autoinhibited state. Phosphorylation by TBK1 and IKBKE disrupts this autoinhibition leading to the liberation of the DNA-binding and dimerization activities and its nuclear localization where it can activate type I IFN and ISG genes. Phosphorylation and activation follow the following steps: innate adapter proteins, such as MAVS, STING1 or TICAM1, are first activated by viral RNA, cytosolic DNA and bacterial lipopolysaccharide (LPS), respectively, leading to activation of the kinases TBK1 and IKBKE. These kinases then phosphorylate the adapter proteins on their pLxIS motif, leading to recruitment of IRF3, thereby licensing IRF3 for phosphorylation by TBK1. Phosphorylated IRF3 dissociates from the adapter proteins, dimerizes, and then enters the nucleus to induce IFNs. Its activity is regulated as follows. (Microbial infection) Activated upon coronavirus SARS-CoV-2 infection. Key transcriptional regulator of type I interferon (IFN)-dependent immune responses which plays a critical role in the innate immune response against DNA and RNA viruses. Regulates the transcription of type I IFN genes (IFN-alpha and IFN-beta) and IFN-stimulated genes (ISG) by binding to an interferon-stimulated response element (ISRE) in their promoters. Acts as a more potent activator of the IFN-beta (IFNB) gene than the IFN-alpha (IFNA) gene and plays a critical role in both the early and late phases of the IFNA/B gene induction. Found in an inactive form in the cytoplasm of uninfected cells and following viral infection, double-stranded RNA (dsRNA), or toll-like receptor (TLR) signaling, is phosphorylated by IKBKE and TBK1 kinases. This induces a conformational change, leading to its dimerization and nuclear localization and association with CREB binding protein (CREBBP) to form dsRNA-activated factor 1 (DRAF1), a complex which activates the transcription of the type I IFN and ISG genes. Can activate distinct gene expression programs in macrophages and can induce significant apoptosis in primary macrophages. In response to Sendai virus infection, is recruited by TOMM70:HSP90AA1 to mitochondrion and forms an apoptosis complex TOMM70:HSP90AA1:IRF3:BAX inducing apoptosis. Key transcription factor regulating the IFN response during SARS-CoV-2 infection. This chain is Interferon regulatory factor 3, found in Homo sapiens (Human).